We begin with the raw amino-acid sequence, 128 residues long: Holo-[acyl-carrier-protein] synthase (128 aa).

Mg(2+)-binding residues include aspartate 7 and glutamate 55.

Belongs to the P-Pant transferase superfamily. AcpS family. It depends on Mg(2+) as a cofactor.

It is found in the cytoplasm. The catalysed reaction is apo-[ACP] + CoA = holo-[ACP] + adenosine 3',5'-bisphosphate + H(+). Its function is as follows. Transfers the 4'-phosphopantetheine moiety from coenzyme A to a Ser of acyl-carrier-protein. This is Holo-[acyl-carrier-protein] synthase from Moorella thermoacetica (strain ATCC 39073 / JCM 9320).